The following is a 203-amino-acid chain: SPbeta prophage-derived uncharacterized lipoprotein YonS (203 aa).

Positions 1 to 21 (MKLFKKLGILLLITSLILLAA) are cleaved as a signal peptide. C22 is lipidated: N-palmitoyl cysteine. A lipid anchor (S-diacylglycerol cysteine) is attached at C22. The span at 27–46 (ESSSSSEDTNNATDTNTSES) shows a compositional bias: low complexity. The tract at residues 27–57 (ESSSSSEDTNNATDTNTSESQDISVNGPEKV) is disordered.

It is found in the cell membrane. This Bacillus subtilis (strain 168) protein is SPbeta prophage-derived uncharacterized lipoprotein YonS (yonS).